Reading from the N-terminus, the 291-residue chain is 4-hydroxy-tetrahydrodipicolinate synthase (291 aa).

Pyruvate is bound at residue T44. The active-site Proton donor/acceptor is Y132. K160 (schiff-base intermediate with substrate) is an active-site residue. Position 202 (V202) interacts with pyruvate.

This sequence belongs to the DapA family. Homotetramer; dimer of dimers.

The protein localises to the cytoplasm. It carries out the reaction L-aspartate 4-semialdehyde + pyruvate = (2S,4S)-4-hydroxy-2,3,4,5-tetrahydrodipicolinate + H2O + H(+). Its pathway is amino-acid biosynthesis; L-lysine biosynthesis via DAP pathway; (S)-tetrahydrodipicolinate from L-aspartate: step 3/4. Catalyzes the condensation of (S)-aspartate-beta-semialdehyde [(S)-ASA] and pyruvate to 4-hydroxy-tetrahydrodipicolinate (HTPA). The chain is 4-hydroxy-tetrahydrodipicolinate synthase from Clostridium perfringens (strain ATCC 13124 / DSM 756 / JCM 1290 / NCIMB 6125 / NCTC 8237 / Type A).